The sequence spans 520 residues: Cobyric acid synthase (520 aa).

The region spanning 257–451 (WLTVAAVRLP…VHGLLESDGF (195 aa)) is the GATase cobBQ-type domain. C338 acts as the Nucleophile in catalysis. Residue H443 is part of the active site.

Belongs to the CobB/CobQ family. CobQ subfamily.

Its pathway is cofactor biosynthesis; adenosylcobalamin biosynthesis. Functionally, catalyzes amidations at positions B, D, E, and G on adenosylcobyrinic A,C-diamide. NH(2) groups are provided by glutamine, and one molecule of ATP is hydrogenolyzed for each amidation. This is Cobyric acid synthase from Nocardia farcinica (strain IFM 10152).